The following is a 334-amino-acid chain: Large ribosomal subunit protein uL3 (334 aa).

Basic residues predominate over residues 1–10; that stretch reads MGMKKSRPRR. Residues 1–20 form a disordered region; it reads MGMKKSRPRRGSLAFSPRKR.

Belongs to the universal ribosomal protein uL3 family. Part of the 50S ribosomal subunit. Forms a cluster with proteins L14 and L24e.

In terms of biological role, one of the primary rRNA binding proteins, it binds directly near the 3'-end of the 23S rRNA, where it nucleates assembly of the 50S subunit. This Methanococcus maripaludis (strain C6 / ATCC BAA-1332) protein is Large ribosomal subunit protein uL3.